The sequence spans 663 residues: UvrABC system protein B (663 aa).

In terms of domain architecture, Helicase ATP-binding spans 31 to 271 (DNIEGGEKAQ…EQSISKIQAE (241 aa)). Residue 44–51 (GATGTGKT) participates in ATP binding. The Beta-hairpin motif lies at 97–120 (YYDYYQPEAYVPSSDTYIEKDSSV). A Helicase C-terminal domain is found at 435–601 (QMDDLLGEIN…TIKKDIRDLI (167 aa)). The region spanning 627 to 662 (QEAIKQLQKNMQEAAELLDFELAAQLRDLILELKAM) is the UVR domain.

It belongs to the UvrB family. As to quaternary structure, forms a heterotetramer with UvrA during the search for lesions. Interacts with UvrC in an incision complex.

Its subcellular location is the cytoplasm. Its function is as follows. The UvrABC repair system catalyzes the recognition and processing of DNA lesions. A damage recognition complex composed of 2 UvrA and 2 UvrB subunits scans DNA for abnormalities. Upon binding of the UvrA(2)B(2) complex to a putative damaged site, the DNA wraps around one UvrB monomer. DNA wrap is dependent on ATP binding by UvrB and probably causes local melting of the DNA helix, facilitating insertion of UvrB beta-hairpin between the DNA strands. Then UvrB probes one DNA strand for the presence of a lesion. If a lesion is found the UvrA subunits dissociate and the UvrB-DNA preincision complex is formed. This complex is subsequently bound by UvrC and the second UvrB is released. If no lesion is found, the DNA wraps around the other UvrB subunit that will check the other stand for damage. The sequence is that of UvrABC system protein B from Streptococcus equi subsp. equi (strain 4047).